A 59-amino-acid chain; its full sequence is Large ribosomal subunit protein bL32 (59 aa).

The tract at residues 1-20 (MAVPRNRHSNARKNIRRSHH) is disordered.

Belongs to the bacterial ribosomal protein bL32 family.

This Chlamydia trachomatis serovar A (strain ATCC VR-571B / DSM 19440 / HAR-13) protein is Large ribosomal subunit protein bL32.